The primary structure comprises 178 residues: Large ribosomal subunit protein uL5 (178 aa).

The protein belongs to the universal ribosomal protein uL5 family. Part of the 50S ribosomal subunit; part of the 5S rRNA/L5/L18/L25 subcomplex. Contacts the 5S rRNA and the P site tRNA. Forms a bridge to the 30S subunit in the 70S ribosome.

This is one of the proteins that bind and probably mediate the attachment of the 5S RNA into the large ribosomal subunit, where it forms part of the central protuberance. In the 70S ribosome it contacts protein S13 of the 30S subunit (bridge B1b), connecting the 2 subunits; this bridge is implicated in subunit movement. Contacts the P site tRNA; the 5S rRNA and some of its associated proteins might help stabilize positioning of ribosome-bound tRNAs. In Prochlorococcus marinus (strain MIT 9515), this protein is Large ribosomal subunit protein uL5.